Here is a 256-residue protein sequence, read N- to C-terminus: MKRFAVVTLFPDAIDCWLQASVVGRARGRAFDVLYVNPRDFAKDRYRSVDDYMFGGGPGMLMRYDVLKPALDHAKILVQNPLVLALSAGGKVLNQEMCTILSSYEGDIVLLCGHYEGMDDRIFDHVDLEVSVGDYVLSGGELGAAVIMETVIRLLPGFVEKSDNVRKESFTNNLLEEPQFTRPREYEGKEVPEVLLSGHHQRIELWKKEQRIKRTLVQRPDLLTSAKLEPMDLQILRRVLTDMEKVKRAIFGEQSN.

S-adenosyl-L-methionine contacts are provided by residues Gly113 and 132–137 (VGDYVL).

The protein belongs to the RNA methyltransferase TrmD family. Homodimer.

The protein resides in the cytoplasm. The enzyme catalyses guanosine(37) in tRNA + S-adenosyl-L-methionine = N(1)-methylguanosine(37) in tRNA + S-adenosyl-L-homocysteine + H(+). In terms of biological role, specifically methylates guanosine-37 in various tRNAs. The polypeptide is tRNA (guanine-N(1)-)-methyltransferase (Coprothermobacter proteolyticus (strain ATCC 35245 / DSM 5265 / OCM 4 / BT)).